The chain runs to 321 residues: Protein-L-histidine N-pros-methyltransferase (321 aa).

A signal peptide spans 1 to 24 (MRLWLCWLGCYTLLLWALRRRMWA). Residue Asn-89 is glycosylated (N-linked (GlcNAc...) asparagine). S-adenosyl-L-homocysteine contacts are provided by Glu-177, Asn-213, and Tyr-298.

It belongs to the METTL9 family.

It is found in the endoplasmic reticulum. It localises to the mitochondrion. The enzyme catalyses L-histidyl-[protein] + S-adenosyl-L-methionine = N(pros)-methyl-L-histidyl-[protein] + S-adenosyl-L-homocysteine + H(+). Protein-histidine N-methyltransferase that specifically catalyzes 1-methylhistidine (pros-methylhistidine) methylation of target proteins. Mediates methylation of proteins with a His-x-His (HxH) motif (where 'x' is preferably a small amino acid); 1-methylhistidine modification may affect the binding of zinc and other metals to its target proteins. This chain is Protein-L-histidine N-pros-methyltransferase, found in Gallus gallus (Chicken).